Reading from the N-terminus, the 330-residue chain is 7,8-didemethyl-8-hydroxy-5-deazariboflavin synthase (330 aa).

In terms of domain architecture, Radical SAM core spans 13-253 (VTFSKNAFIP…EDISIQVPPN (241 aa)). The [4Fe-4S] cluster site is built by Cys-27, Cys-31, and Cys-34.

The protein belongs to the radical SAM superfamily. CofG family. Consists of two subunits, CofG and CofH. The cofactor is [4Fe-4S] cluster.

It carries out the reaction 5-amino-5-(4-hydroxybenzyl)-6-(D-ribitylimino)-5,6-dihydrouracil + S-adenosyl-L-methionine = 7,8-didemethyl-8-hydroxy-5-deazariboflavin + 5'-deoxyadenosine + L-methionine + NH4(+) + H(+). It functions in the pathway cofactor biosynthesis; coenzyme F0 biosynthesis. Its function is as follows. Catalyzes the radical-mediated synthesis of 7,8-didemethyl-8-hydroxy-5-deazariboflavin from 5-amino-5-(4-hydroxybenzyl)-6-(D-ribitylimino)-5,6-dihydrouracil. The sequence is that of 7,8-didemethyl-8-hydroxy-5-deazariboflavin synthase from Methanococcus maripaludis (strain DSM 14266 / JCM 13030 / NBRC 101832 / S2 / LL).